A 109-amino-acid polypeptide reads, in one-letter code: Elongin-C (109 aa).

This sequence belongs to the SKP1 family.

The protein resides in the nucleus. Its function is as follows. SIII, also known as elongin, is a general transcription elongation factor that increases the RNA polymerase II transcription elongation past template-encoded arresting sites. Subunit A is transcriptionally active and its transcription activity is strongly enhanced by binding to the dimeric complex of the SIII regulatory subunits B and C (elongin BC complex). In terms of biological role, the elongin BC complex seems to be involved as an adapter protein in the proteasomal degradation of target proteins via different E3 ubiquitin ligase complexes. This is Elongin-C (tceb1) from Dictyostelium discoideum (Social amoeba).